A 206-amino-acid chain; its full sequence is Lipid A acyltransferase PagP (206 aa).

Residues 1 to 22 (MKQMVCWLTAGLLTLGGLPARA) form the signal peptide. The span at 26 to 46 (VPAVPETPAAPAAPAVQETPA) shows a compositional bias: low complexity. Positions 26 to 50 (VPAVPETPAAPAAPAVQETPASSAA) are disordered. Active-site residues include His80, Asp123, and Ser124.

This sequence belongs to the lipid A palmitoyltransferase family. Homodimer.

The protein resides in the cell outer membrane. It carries out the reaction a lipid A + a 1,2-diacyl-sn-glycero-3-phosphocholine = a hepta-acyl lipid A + a 2-acyl-sn-glycero-3-phosphocholine. The enzyme catalyses a lipid IVA + a 1,2-diacyl-sn-glycero-3-phosphocholine = a lipid IVB + a 2-acyl-sn-glycero-3-phosphocholine. It catalyses the reaction a lipid IIA + a 1,2-diacyl-sn-glycero-3-phosphocholine = a lipid IIB + a 2-acyl-sn-glycero-3-phosphocholine. Its function is as follows. Transfers a fatty acid residue from the sn-1 position of a phospholipid to the N-linked hydroxyfatty acid chain on the proximal unit of lipid A or its precursors. In Laribacter hongkongensis (strain HLHK9), this protein is Lipid A acyltransferase PagP.